Here is a 191-residue protein sequence, read N- to C-terminus: Probable GTP-binding protein EngB (191 aa).

Positions 22–191 (DFDHFLILGR…KLINEEFSNE (170 aa)) constitute an EngB-type G domain. Residues 30–37 (GRSNVGKS), 57–61 (GKTIT), 75–78 (DAPG), 142–145 (TKYD), and 172–174 (TSS) each bind GTP. 2 residues coordinate Mg(2+): serine 37 and threonine 59.

The protein belongs to the TRAFAC class TrmE-Era-EngA-EngB-Septin-like GTPase superfamily. EngB GTPase family. Requires Mg(2+) as cofactor.

Functionally, necessary for normal cell division and for the maintenance of normal septation. This chain is Probable GTP-binding protein EngB, found in Acholeplasma laidlawii (strain PG-8A).